A 306-amino-acid chain; its full sequence is Porphobilinogen deaminase (306 aa).

The residue at position 239 (Cys-239) is an S-(dipyrrolylmethanemethyl)cysteine.

This sequence belongs to the HMBS family. As to quaternary structure, monomer. Requires dipyrromethane as cofactor.

The catalysed reaction is 4 porphobilinogen + H2O = hydroxymethylbilane + 4 NH4(+). The protein operates within porphyrin-containing compound metabolism; protoporphyrin-IX biosynthesis; coproporphyrinogen-III from 5-aminolevulinate: step 2/4. Functionally, tetrapolymerization of the monopyrrole PBG into the hydroxymethylbilane pre-uroporphyrinogen in several discrete steps. The sequence is that of Porphobilinogen deaminase from Helicobacter acinonychis (strain Sheeba).